The sequence spans 229 residues: Large ribosomal subunit protein uL1 (229 aa).

Belongs to the universal ribosomal protein uL1 family. Part of the 50S ribosomal subunit.

In terms of biological role, binds directly to 23S rRNA. The L1 stalk is quite mobile in the ribosome, and is involved in E site tRNA release. Functionally, protein L1 is also a translational repressor protein, it controls the translation of the L11 operon by binding to its mRNA. The sequence is that of Large ribosomal subunit protein uL1 from Lacticaseibacillus casei (strain BL23) (Lactobacillus casei).